A 313-amino-acid chain; its full sequence is Cyclin-dependent kinase B2-1 (313 aa).

Met1 carries the post-translational modification N-acetylmethionine. The region spanning Phe14–Phe304 is the Protein kinase domain. ATP is bound by residues Val20–Val28 and Lys43. At Tyr25 the chain carries Phosphotyrosine. Asp145 functions as the Proton acceptor in the catalytic mechanism. A Phosphothreonine modification is found at Thr179.

This sequence belongs to the protein kinase superfamily. CMGC Ser/Thr protein kinase family. CDC2/CDKX subfamily. As to quaternary structure, interacts with CYCD4-1 and CKS1. As to expression, expressed in root tips, shoot apical meristem, leaf primordia vascular tissues and tapetum of anthers.

It carries out the reaction L-seryl-[protein] + ATP = O-phospho-L-seryl-[protein] + ADP + H(+). The catalysed reaction is L-threonyl-[protein] + ATP = O-phospho-L-threonyl-[protein] + ADP + H(+). It catalyses the reaction [DNA-directed RNA polymerase] + ATP = phospho-[DNA-directed RNA polymerase] + ADP + H(+). The polypeptide is Cyclin-dependent kinase B2-1 (CDKB2-1) (Arabidopsis thaliana (Mouse-ear cress)).